A 741-amino-acid polypeptide reads, in one-letter code: 1,4-alpha-glucan branching enzyme GlgB 2 (741 aa).

Residues 1–38 (MALRDTSIPEPSGPVPPAPGACATAPPLDPTDRGRLLA) form a disordered region. Residue Asp421 is the Nucleophile of the active site. The Proton donor role is filled by Glu474.

This sequence belongs to the glycosyl hydrolase 13 family. GlgB subfamily. In terms of assembly, monomer.

It catalyses the reaction Transfers a segment of a (1-&gt;4)-alpha-D-glucan chain to a primary hydroxy group in a similar glucan chain.. It participates in glycan biosynthesis; glycogen biosynthesis. Functionally, catalyzes the formation of the alpha-1,6-glucosidic linkages in glycogen by scission of a 1,4-alpha-linked oligosaccharide from growing alpha-1,4-glucan chains and the subsequent attachment of the oligosaccharide to the alpha-1,6 position. This is 1,4-alpha-glucan branching enzyme GlgB 2 (glgB2) from Streptomyces coelicolor (strain ATCC BAA-471 / A3(2) / M145).